The primary structure comprises 464 residues: Protein ABHD18 (464 aa).

Positions methionine 1 to glycine 24 are cleaved as a signal peptide. The N-linked (GlcNAc...) asparagine glycan is linked to asparagine 341.

This sequence belongs to the AB hydrolase superfamily.

The protein resides in the secreted. The protein is Protein ABHD18 of Mus musculus (Mouse).